Reading from the N-terminus, the 253-residue chain is Shikimate dehydrogenase (253 aa).

Catalysis depends on Lys63, which acts as the Proton acceptor. Residue 115 to 119 (GAGGA) coordinates NADP(+).

The protein belongs to the shikimate dehydrogenase family.

It catalyses the reaction shikimate + NADP(+) = 3-dehydroshikimate + NADPH + H(+). It functions in the pathway metabolic intermediate biosynthesis; chorismate biosynthesis; chorismate from D-erythrose 4-phosphate and phosphoenolpyruvate: step 4/7. In Thermotoga neapolitana (strain ATCC 49049 / DSM 4359 / NBRC 107923 / NS-E), this protein is Shikimate dehydrogenase (aroE).